A 274-amino-acid chain; its full sequence is HTH-type transcriptional regulator GadX (274 aa).

Residues 145–242 form the HTH araC/xylS-type domain; sequence TRVCTVINNN…GMTPTEYQER (98 aa). 2 consecutive DNA-binding regions (H-T-H motif) follow at residues 162–183 and 209–232; these read ARIA…REEG and IKRV…RNYY.

As to quaternary structure, homodimer.

Positively regulates the expression of about fifteen genes involved in acid resistance such as gadA, gadB and gadC. Depending on the conditions (growth phase and medium), can repress gadW. Negatively regulates perA expression in acidic conditions and positively regulates it in alkaline conditions. The protein is HTH-type transcriptional regulator GadX (gadX) of Escherichia coli O127:H6 (strain E2348/69 / EPEC).